We begin with the raw amino-acid sequence, 322 residues long: DNA repair and recombination protein RadA (322 aa).

Residue 105–112 (GMYGSGKT) coordinates ATP.

This sequence belongs to the eukaryotic RecA-like protein family.

In terms of biological role, involved in DNA repair and in homologous recombination. Binds and assemble on single-stranded DNA to form a nucleoprotein filament. Hydrolyzes ATP in a ssDNA-dependent manner and promotes DNA strand exchange between homologous DNA molecules. The sequence is that of DNA repair and recombination protein RadA from Methanococcus maripaludis (strain C5 / ATCC BAA-1333).